Consider the following 155-residue polypeptide: Small ribosomal subunit protein uS7 (155 aa).

Belongs to the universal ribosomal protein uS7 family. Part of the 30S ribosomal subunit. Contacts proteins S9 and S11.

One of the primary rRNA binding proteins, it binds directly to 16S rRNA where it nucleates assembly of the head domain of the 30S subunit. Is located at the subunit interface close to the decoding center, probably blocks exit of the E-site tRNA. The chain is Small ribosomal subunit protein uS7 from Helicobacter pylori (strain Shi470).